A 119-amino-acid polypeptide reads, in one-letter code: Small ribosomal subunit protein uS13 (119 aa).

Residues 94–113 show a composition bias toward basic residues; sequence GLPVRGQRTKTNARTRKGPR. The segment at 94-119 is disordered; sequence GLPVRGQRTKTNARTRKGPRKAIGAK.

It belongs to the universal ribosomal protein uS13 family. As to quaternary structure, part of the 30S ribosomal subunit. Forms a loose heterodimer with protein S19. Forms two bridges to the 50S subunit in the 70S ribosome.

Located at the top of the head of the 30S subunit, it contacts several helices of the 16S rRNA. In the 70S ribosome it contacts the 23S rRNA (bridge B1a) and protein L5 of the 50S subunit (bridge B1b), connecting the 2 subunits; these bridges are implicated in subunit movement. Contacts the tRNAs in the A and P-sites. The chain is Small ribosomal subunit protein uS13 from Nitrosomonas europaea (strain ATCC 19718 / CIP 103999 / KCTC 2705 / NBRC 14298).